We begin with the raw amino-acid sequence, 122 residues long: Large ribosomal subunit protein bL12 (122 aa).

This sequence belongs to the bacterial ribosomal protein bL12 family. Homodimer. Part of the ribosomal stalk of the 50S ribosomal subunit. Forms a multimeric L10(L12)X complex, where L10 forms an elongated spine to which 2 to 4 L12 dimers bind in a sequential fashion. Binds GTP-bound translation factors.

In terms of biological role, forms part of the ribosomal stalk which helps the ribosome interact with GTP-bound translation factors. Is thus essential for accurate translation. This Shewanella putrefaciens (strain CN-32 / ATCC BAA-453) protein is Large ribosomal subunit protein bL12.